Consider the following 293-residue polypeptide: ATP synthase gamma chain (293 aa).

Belongs to the ATPase gamma chain family. As to quaternary structure, F-type ATPases have 2 components, CF(1) - the catalytic core - and CF(0) - the membrane proton channel. CF(1) has five subunits: alpha(3), beta(3), gamma(1), delta(1), epsilon(1). CF(0) has three main subunits: a, b and c.

Its subcellular location is the cell inner membrane. In terms of biological role, produces ATP from ADP in the presence of a proton gradient across the membrane. The gamma chain is believed to be important in regulating ATPase activity and the flow of protons through the CF(0) complex. In Nitratidesulfovibrio vulgaris (strain DSM 19637 / Miyazaki F) (Desulfovibrio vulgaris), this protein is ATP synthase gamma chain.